Reading from the N-terminus, the 229-residue chain is PKHD-type hydroxylase BRADO4652 (229 aa).

The region spanning 78–180 is the Fe2OG dioxygenase domain; it reads QIFPPLFNRY…RVASFFWMQS (103 aa). 3 residues coordinate Fe cation: His-98, Asp-100, and His-161. Arg-171 provides a ligand contact to 2-oxoglutarate.

The cofactor is Fe(2+). L-ascorbate is required as a cofactor.

This chain is PKHD-type hydroxylase BRADO4652, found in Bradyrhizobium sp. (strain ORS 278).